We begin with the raw amino-acid sequence, 434 residues long: 3-phosphoshikimate 1-carboxyvinyltransferase (434 aa).

3-phosphoshikimate is bound by residues K22, S23, and R27. K22 provides a ligand contact to phosphoenolpyruvate. Positions 93 and 121 each coordinate phosphoenolpyruvate. Positions 168, 169, 170, 199, 320, and 347 each coordinate 3-phosphoshikimate. Position 170 (Q170) interacts with phosphoenolpyruvate. D320 acts as the Proton acceptor in catalysis. Positions 351, 395, and 420 each coordinate phosphoenolpyruvate.

Belongs to the EPSP synthase family. Monomer.

The protein localises to the cytoplasm. The catalysed reaction is 3-phosphoshikimate + phosphoenolpyruvate = 5-O-(1-carboxyvinyl)-3-phosphoshikimate + phosphate. It participates in metabolic intermediate biosynthesis; chorismate biosynthesis; chorismate from D-erythrose 4-phosphate and phosphoenolpyruvate: step 6/7. In terms of biological role, catalyzes the transfer of the enolpyruvyl moiety of phosphoenolpyruvate (PEP) to the 5-hydroxyl of shikimate-3-phosphate (S3P) to produce enolpyruvyl shikimate-3-phosphate and inorganic phosphate. This Cupriavidus necator (strain ATCC 17699 / DSM 428 / KCTC 22496 / NCIMB 10442 / H16 / Stanier 337) (Ralstonia eutropha) protein is 3-phosphoshikimate 1-carboxyvinyltransferase.